The chain runs to 301 residues: Sulfate adenylyltransferase subunit 2 (301 aa).

This sequence belongs to the PAPS reductase family. CysD subfamily. In terms of assembly, heterodimer composed of CysD, the smaller subunit, and CysN.

The enzyme catalyses sulfate + ATP + H(+) = adenosine 5'-phosphosulfate + diphosphate. It functions in the pathway sulfur metabolism; hydrogen sulfide biosynthesis; sulfite from sulfate: step 1/3. With CysN forms the ATP sulfurylase (ATPS) that catalyzes the adenylation of sulfate producing adenosine 5'-phosphosulfate (APS) and diphosphate, the first enzymatic step in sulfur assimilation pathway. APS synthesis involves the formation of a high-energy phosphoric-sulfuric acid anhydride bond driven by GTP hydrolysis by CysN coupled to ATP hydrolysis by CysD. The chain is Sulfate adenylyltransferase subunit 2 from Shewanella loihica (strain ATCC BAA-1088 / PV-4).